The chain runs to 2617 residues: Ubiquitin carboxyl-terminal hydrolase 24 (2617 aa).

The UBA domain occupies 3-44 (SEEEQHMTTLLCMGFSDPATIRKALRLAKNDINEAVALLTNE). The interval 45-99 (RPGLDYGGYEPMDSGGPSPGPGGGPRGDSGSDGSGPSRGGSTGGGGGFDPPPAYH) is disordered. Phosphoserine occurs at positions 62 and 85. Residues 65–92 (PGGGPRGDSGSDGSGPSRGGSTGGGGGF) show a composition bias toward gly residues. Position 939 is a phosphotyrosine (Tyr939). 2 disordered regions span residues 1030–1056 (KTSG…SGAF) and 1127–1148 (LLSE…QQHQ). Low complexity-rich tracts occupy residues 1031-1056 (TSGS…SGAF) and 1128-1148 (LSET…QQHQ). Ser1138 and Ser1282 each carry phosphoserine. Residues 1686 to 2039 (VGLRNGGATC…NAYMLFYQRV (354 aa)) enclose the USP domain. The active-site Nucleophile is the Cys1695. The interval 1920–1942 (QDSSSEVGENGRNMDQGGGGSPR) is disordered. Ser1940 bears the Phosphoserine mark. Residue His1967 is the Proton acceptor of the active site. 3 positions are modified to phosphoserine: Ser2044, Ser2074, and Ser2558. The disordered stretch occupies residues 2060–2087 (AEDLSLSAPSSPEISPQSSPRPHRPNND). Over residues 2066–2079 (SAPSSPEISPQSSP) the composition is skewed to low complexity. Residue Thr2562 is modified to Phosphothreonine. The disordered stretch occupies residues 2572 to 2617 (EKEQSGSSNGSESSPANENGERHLQQGSESPMMIGELRSDLDDVDP). A compositionally biased stretch (low complexity) spans 2576 to 2589 (SGSSNGSESSPANE). Position 2601 is a phosphoserine (Ser2601). Over residues 2608-2617 (LRSDLDDVDP) the composition is skewed to basic and acidic residues.

Belongs to the peptidase C19 family.

The enzyme catalyses Thiol-dependent hydrolysis of ester, thioester, amide, peptide and isopeptide bonds formed by the C-terminal Gly of ubiquitin (a 76-residue protein attached to proteins as an intracellular targeting signal).. Its function is as follows. Protease that can remove conjugated ubiquitin from target proteins and polyubiquitin chains. Deubiquitinates DDB2, preventing its proteasomal degradation. This is Ubiquitin carboxyl-terminal hydrolase 24 (Usp24) from Mus musculus (Mouse).